The following is a 182-amino-acid chain: Keratin, ultra high-sulfur matrix protein (182 aa).

Belongs to the KRTAP type 5 family. In terms of tissue distribution, cuticle layers of differentiating wool follicles.

Its function is as follows. The keratin products of mammalian epidermal derivatives such as wool and hair consist of microfibrils embedded in a rigid matrix of other proteins. The matrix proteins include the high-sulfur and high-tyrosine keratins, having molecular weights of 6-20 kDa, whereas the microfibrils contain the larger, low-sulfur keratins (40-56 kDa). In Ovis aries (Sheep), this protein is Keratin, ultra high-sulfur matrix protein.